A 323-amino-acid chain; its full sequence is Quinolinate synthase (323 aa).

Positions 37 and 54 each coordinate iminosuccinate. [4Fe-4S] cluster is bound at residue C99. Iminosuccinate contacts are provided by residues 125–127 (YIN) and S142. C185 is a [4Fe-4S] cluster binding site. Iminosuccinate contacts are provided by residues 211 to 213 (HPE) and T228. C278 is a binding site for [4Fe-4S] cluster.

Belongs to the quinolinate synthase family. Type 2 subfamily. It depends on [4Fe-4S] cluster as a cofactor.

The protein localises to the cytoplasm. The catalysed reaction is iminosuccinate + dihydroxyacetone phosphate = quinolinate + phosphate + 2 H2O + H(+). It participates in cofactor biosynthesis; NAD(+) biosynthesis; quinolinate from iminoaspartate: step 1/1. In terms of biological role, catalyzes the condensation of iminoaspartate with dihydroxyacetone phosphate to form quinolinate. This Trichodesmium erythraeum (strain IMS101) protein is Quinolinate synthase.